The chain runs to 294 residues: MGEWAFLGSLLDAVQLQSPLVGRLWLVVMLIFRILVLATVGGAVFEDEQEEFVCNTLQPGCRQTCYDRAFPVSHYRFWLFHILLLSAPPVLFVVYSMHRAGKEAGGAEAAAQCAPGLPEAQCAPCALRARRARRCYLLSVALRLLAELTFLGGQALLYGFRVAPHFACAGPPCPHTVDCFVSRPTEKTVFVLFYFAVGLLSALLSVAELGHLLWKGRPRAGERDNRCNRAHEEAQKLLPPPPPPPPPPALPSRRPGPEPCAPPAYAHPAPASLRECGSGRGKASPATGRRDLAI.

Residues 1–24 (MGEWAFLGSLLDAVQLQSPLVGRL) lie on the Cytoplasmic side of the membrane. A helical membrane pass occupies residues 25-45 (WLVVMLIFRILVLATVGGAVF). Topologically, residues 46–76 (EDEQEEFVCNTLQPGCRQTCYDRAFPVSHYR) are extracellular. The helical transmembrane segment at 77–97 (FWLFHILLLSAPPVLFVVYSM) threads the bilayer. The Cytoplasmic portion of the chain corresponds to 98–136 (HRAGKEAGGAEAAAQCAPGLPEAQCAPCALRARRARRCY). The helical transmembrane segment at 137–157 (LLSVALRLLAELTFLGGQALL) threads the bilayer. The Extracellular segment spans residues 158–188 (YGFRVAPHFACAGPPCPHTVDCFVSRPTEKT). A helical membrane pass occupies residues 189 to 209 (VFVLFYFAVGLLSALLSVAEL). Over 210–294 (GHLLWKGRPR…PATGRRDLAI (85 aa)) the chain is Cytoplasmic. The tract at residues 233-294 (EAQKLLPPPP…PATGRRDLAI (62 aa)) is disordered. The segment covering 238–250 (LPPPPPPPPPPAL) has biased composition (pro residues).

This sequence belongs to the connexin family. Delta-type subfamily. In terms of assembly, a connexon is composed of a hexamer of connexins. Interacts with TJP1. As to expression, expressed in vascular smooth muscle cells. Found in heart, colon, and artery (at protein level). Found in cerebral cortex, heart, liver, lung, kidney, spleen and testis.

The protein resides in the cell membrane. It localises to the cell junction. Its subcellular location is the gap junction. Its function is as follows. One gap junction consists of a cluster of closely packed pairs of transmembrane channels, the connexons, through which materials of low MW diffuse from one cell to a neighboring cell. The polypeptide is Gap junction delta-3 protein (GJD3) (Homo sapiens (Human)).